Here is a 666-residue protein sequence, read N- to C-terminus: Probable potassium transport system protein Kup (666 aa).

The next 12 helical transmembrane spans lie at 16–36 (GFIIALGIVYGDIGTSPLYTM), 58–78 (ISLIIWTLTLITTIKYVLIAL), 98–118 (ISPWLIIPAMIGGATLLSDGA), 141–161 (IYQNQTNVIITTLVILIVLFG), 165–185 (FGTGFIGKIFGPVMFIWFSFL), 221–241 (IFILGSIFLATTGAEALYSDL), 253–273 (WPFVKMCIVLSYCGQAAWILA), 299–319 (LATLAAIIASQALISGSFTLI), 343–363 (LYIPVINWILFAVTSCTVLAF), 373–393 (YGLAITITMLMTTILLKYYLI), 399–419 (PILAHLAMAFFALVEFIFFLA), and 424–444 (FMHGGYAVVILALAIVFVMFI).

Belongs to the HAK/KUP transporter (TC 2.A.72) family.

Its subcellular location is the cell membrane. The enzyme catalyses K(+)(in) + H(+)(in) = K(+)(out) + H(+)(out). Functionally, transport of potassium into the cell. Likely operates as a K(+):H(+) symporter. The sequence is that of Probable potassium transport system protein Kup from Streptococcus pyogenes serotype M28 (strain MGAS6180).